We begin with the raw amino-acid sequence, 198 residues long: Recombination protein RecR (198 aa).

The C4-type zinc-finger motif lies at 57 to 72 (CTVCGHITDTDPCYIC). The Toprim domain occupies 80–175 (TTICVVQDPK…KVTRIAHGLP (96 aa)).

This sequence belongs to the RecR family.

Its function is as follows. May play a role in DNA repair. It seems to be involved in an RecBC-independent recombinational process of DNA repair. It may act with RecF and RecO. The protein is Recombination protein RecR of Geobacillus sp. (strain WCH70).